The primary structure comprises 198 residues: GTP cyclohydrolase-2 (198 aa).

GTP is bound at residue 52 to 56 (RMHSE). Zn(2+) is bound by residues C57, C68, and C70. GTP-binding positions include Q73, 94-96 (EGR), and T116. The active-site Proton acceptor is the D128. R130 acts as the Nucleophile in catalysis. GTP is bound by residues T151 and K156.

Belongs to the GTP cyclohydrolase II family. Zn(2+) is required as a cofactor.

It carries out the reaction GTP + 4 H2O = 2,5-diamino-6-hydroxy-4-(5-phosphoribosylamino)-pyrimidine + formate + 2 phosphate + 3 H(+). It functions in the pathway cofactor biosynthesis; riboflavin biosynthesis; 5-amino-6-(D-ribitylamino)uracil from GTP: step 1/4. Its function is as follows. Catalyzes the conversion of GTP to 2,5-diamino-6-ribosylamino-4(3H)-pyrimidinone 5'-phosphate (DARP), formate and pyrophosphate. This chain is GTP cyclohydrolase-2, found in Vibrio parahaemolyticus serotype O3:K6 (strain RIMD 2210633).